The chain runs to 186 residues: Agglutinin isolectin 3 (186 aa).

Pyrrolidone carboxylic acid is present on Gln1. 4 Chitin-binding type-1 domains span residues 1–42 (QRCG…ACWT), 43–85 (SKRC…PCRA), 86–128 (DIKC…ACST), and 129–171 (DKPC…GCDG). 16 disulfides stabilise this stretch: Cys3-Cys18, Cys12-Cys24, Cys17-Cys31, Cys35-Cys40, Cys46-Cys61, Cys55-Cys67, Cys60-Cys74, Cys78-Cys83, Cys89-Cys104, Cys98-Cys110, Cys103-Cys117, Cys121-Cys126, Cys132-Cys147, Cys141-Cys153, Cys146-Cys160, and Cys164-Cys169. Residue 10–12 (MEC) participates in substrate binding. Residue 62-73 (SQYGHCGFGAEY) participates in substrate binding. 114-115 (SE) contacts substrate. Residues 172-186 (VFAEAIATNSTLLAE) constitute a propeptide that is removed on maturation. The N-linked (GlcNAc...) asparagine glycan is linked to Asn180.

In terms of assembly, homodimer, u-shaped.

Its function is as follows. N-acetyl-D-glucosamine / N-acetyl-D-neuraminic acid binding lectin. The chain is Agglutinin isolectin 3 from Triticum aestivum (Wheat).